The primary structure comprises 428 residues: Protein clpf-1 (428 aa).

ATP is bound by residues glutamate 16, arginine 56, and 124 to 129; that span reads DVGKTT.

Belongs to the Clp1 family. Clp1 subfamily.

The protein localises to the nucleus. Required for endonucleolytic cleavage during polyadenylation-dependent pre-mRNA 3'-end formation. In Caenorhabditis elegans, this protein is Protein clpf-1.